The sequence spans 247 residues: ATP synthase subunit a (247 aa).

Helical transmembrane passes span 24-44, 82-102, 112-132, 141-161, 194-214, and 219-239; these read IAFT…SLLM, FFPF…VGIV, IIVT…YGFY, LFVP…IEVI, MLGA…ALVV, and LELL…CIYI.

This sequence belongs to the ATPase A chain family. F-type ATPases have 2 components, CF(1) - the catalytic core - and CF(0) - the membrane proton channel. CF(1) has five subunits: alpha(3), beta(3), gamma(1), delta(1), epsilon(1). CF(0) has three main subunits: a(1), b(2) and c(9-12). The alpha and beta chains form an alternating ring which encloses part of the gamma chain. CF(1) is attached to CF(0) by a central stalk formed by the gamma and epsilon chains, while a peripheral stalk is formed by the delta and b chains.

Its subcellular location is the cell inner membrane. Functionally, key component of the proton channel; it plays a direct role in the translocation of protons across the membrane. In Nitrobacter hamburgensis (strain DSM 10229 / NCIMB 13809 / X14), this protein is ATP synthase subunit a.